The chain runs to 327 residues: Phenylalanine--tRNA ligase alpha subunit (327 aa).

Position 252 (E252) interacts with Mg(2+).

The protein belongs to the class-II aminoacyl-tRNA synthetase family. Phe-tRNA synthetase alpha subunit type 1 subfamily. In terms of assembly, tetramer of two alpha and two beta subunits. It depends on Mg(2+) as a cofactor.

The protein resides in the cytoplasm. The catalysed reaction is tRNA(Phe) + L-phenylalanine + ATP = L-phenylalanyl-tRNA(Phe) + AMP + diphosphate + H(+). This Photobacterium profundum (strain SS9) protein is Phenylalanine--tRNA ligase alpha subunit.